The following is a 513-amino-acid chain: GMP synthase [glutamine-hydrolyzing] (513 aa).

The Glutamine amidotransferase type-1 domain occupies 3-192 (TVVVLDYGSQ…VSKIAKMEKN (190 aa)). Catalysis depends on Cys80, which acts as the Nucleophile. Active-site residues include His166 and Glu168. The region spanning 193 to 388 (WEMKDFVSEK…LELPQSMINR (196 aa)) is the GMPS ATP-PPase domain. Position 220-226 (220-226 (SGGVDSS)) interacts with ATP.

Homodimer.

It carries out the reaction XMP + L-glutamine + ATP + H2O = GMP + L-glutamate + AMP + diphosphate + 2 H(+). It participates in purine metabolism; GMP biosynthesis; GMP from XMP (L-Gln route): step 1/1. Functionally, catalyzes the synthesis of GMP from XMP. The sequence is that of GMP synthase [glutamine-hydrolyzing] from Thermosipho melanesiensis (strain DSM 12029 / CIP 104789 / BI429).